We begin with the raw amino-acid sequence, 477 residues long: Glycogen synthase (477 aa).

Lys16 is an ADP-alpha-D-glucose binding site.

Belongs to the glycosyltransferase 1 family. Bacterial/plant glycogen synthase subfamily.

The enzyme catalyses [(1-&gt;4)-alpha-D-glucosyl](n) + ADP-alpha-D-glucose = [(1-&gt;4)-alpha-D-glucosyl](n+1) + ADP + H(+). Its pathway is glycan biosynthesis; glycogen biosynthesis. In terms of biological role, synthesizes alpha-1,4-glucan chains using ADP-glucose. The sequence is that of Glycogen synthase from Oceanobacillus iheyensis (strain DSM 14371 / CIP 107618 / JCM 11309 / KCTC 3954 / HTE831).